Here is an 83-residue protein sequence, read N- to C-terminus: MAVKLIRCPSCGEEIEITDLYEGVEIQCSLCNSIMVYQEGKLLLLDTNEEFDLDELESVEEEEEFEDYDEFEEEEEYYYDDEY.

Residues 57-83 (ESVEEEEEFEDYDEFEEEEEYYYDDEY) form a disordered region.

This is an uncharacterized protein from Archaeoglobus fulgidus (strain ATCC 49558 / DSM 4304 / JCM 9628 / NBRC 100126 / VC-16).